A 1187-amino-acid chain; its full sequence is DNA-directed RNA polymerase subunit beta (1187 aa).

The protein belongs to the RNA polymerase beta chain family. The RNAP catalytic core consists of 2 alpha, 1 beta, 1 beta' and 1 omega subunit. When a sigma factor is associated with the core the holoenzyme is formed, which can initiate transcription.

The enzyme catalyses RNA(n) + a ribonucleoside 5'-triphosphate = RNA(n+1) + diphosphate. Its function is as follows. DNA-dependent RNA polymerase catalyzes the transcription of DNA into RNA using the four ribonucleoside triphosphates as substrates. The sequence is that of DNA-directed RNA polymerase subunit beta from Streptococcus mutans serotype c (strain ATCC 700610 / UA159).